The sequence spans 407 residues: Carbamoyl phosphate synthase small chain (407 aa).

Residues 1 to 205 form a CPSase region; the sequence is MTETTPKTAP…LQDGYGEQDA (205 aa). Ser-60, Gly-257, and Gly-259 together coordinate L-glutamine. The region spanning 209–397 is the Glutamine amidotransferase type-1 domain; that stretch reads HVVALDFGVK…INLIRERKGQ (189 aa). Cys-286 (nucleophile) is an active-site residue. 5 residues coordinate L-glutamine: Leu-287, Gln-290, Asn-328, Gly-330, and Phe-331. Catalysis depends on residues His-370 and Glu-372.

The protein belongs to the CarA family. As to quaternary structure, composed of two chains; the small (or glutamine) chain promotes the hydrolysis of glutamine to ammonia, which is used by the large (or ammonia) chain to synthesize carbamoyl phosphate. Tetramer of heterodimers (alpha,beta)4.

It carries out the reaction hydrogencarbonate + L-glutamine + 2 ATP + H2O = carbamoyl phosphate + L-glutamate + 2 ADP + phosphate + 2 H(+). It catalyses the reaction L-glutamine + H2O = L-glutamate + NH4(+). Its pathway is amino-acid biosynthesis; L-arginine biosynthesis; carbamoyl phosphate from bicarbonate: step 1/1. It participates in pyrimidine metabolism; UMP biosynthesis via de novo pathway; (S)-dihydroorotate from bicarbonate: step 1/3. Small subunit of the glutamine-dependent carbamoyl phosphate synthetase (CPSase). CPSase catalyzes the formation of carbamoyl phosphate from the ammonia moiety of glutamine, carbonate, and phosphate donated by ATP, constituting the first step of 2 biosynthetic pathways, one leading to arginine and/or urea and the other to pyrimidine nucleotides. The small subunit (glutamine amidotransferase) binds and cleaves glutamine to supply the large subunit with the substrate ammonia. This chain is Carbamoyl phosphate synthase small chain, found in Brucella suis (strain ATCC 23445 / NCTC 10510).